We begin with the raw amino-acid sequence, 102 residues long: MATKFQEGGQLEAQRSRLGPPKMYKVVLLNDDYTPMDFVITVLQRFFSLDTEQATRIMLKVHNEGRGVCGVFPRDIAATKVEQVSAFARQHQHPLACIMEEN.

It belongs to the ClpS family. As to quaternary structure, binds to the N-terminal domain of the chaperone ClpA.

In terms of biological role, involved in the modulation of the specificity of the ClpAP-mediated ATP-dependent protein degradation. This is ATP-dependent Clp protease adapter protein ClpS from Dechloromonas aromatica (strain RCB).